The primary structure comprises 437 residues: Adenylosuccinate synthetase (437 aa).

GTP-binding positions include 12–18 (GDEGKGK) and 40–42 (GHT). Residue aspartate 13 is the Proton acceptor of the active site. Mg(2+) contacts are provided by aspartate 13 and glycine 40. IMP-binding positions include 13 to 16 (DEGK), 38 to 41 (NAGH), threonine 128, arginine 142, glutamine 223, threonine 238, and arginine 302. Histidine 41 (proton donor) is an active-site residue. 298–304 (TTTGRRR) contacts substrate. Residues arginine 304, 330 to 332 (KLD), and 412 to 414 (SLG) contribute to the GTP site.

This sequence belongs to the adenylosuccinate synthetase family. As to quaternary structure, homodimer. Mg(2+) serves as cofactor.

It is found in the cytoplasm. The catalysed reaction is IMP + L-aspartate + GTP = N(6)-(1,2-dicarboxyethyl)-AMP + GDP + phosphate + 2 H(+). The protein operates within purine metabolism; AMP biosynthesis via de novo pathway; AMP from IMP: step 1/2. Its function is as follows. Plays an important role in the de novo pathway of purine nucleotide biosynthesis. Catalyzes the first committed step in the biosynthesis of AMP from IMP. This chain is Adenylosuccinate synthetase, found in Parasynechococcus marenigrum (strain WH8102).